The sequence spans 76 residues: Alpha/kappa-conotoxin-like pl14.3 (76 aa).

Residues 1 to 27 form the signal peptide; it reads MPSVRSVACCCLLWMMLSVQLVTPGSP. Positions 28 to 39 are excised as a propeptide; that stretch reads ATAQLSGQRTAR. 2 cysteine pairs are disulfide-bonded: cysteine 46–cysteine 61 and cysteine 50–cysteine 63. Aspartic acid 1-amide is present on aspartate 64. Residues 65–76 constitute a propeptide that is removed on maturation; the sequence is GKRDVVSSSMAV.

Belongs to the conotoxin J superfamily. In terms of tissue distribution, expressed by the venom duct.

It is found in the secreted. Highly inhibits both nicotinic acetylcholine receptors (neuronal (alpha-3/beta-4) and muscular (alpha-1/beta-1/epsilon/delta) subtypes) and the voltage-gated potassium channel Kv1.6/KCNA6 subtype. This Conus planorbis (Planorbis cone) protein is Alpha/kappa-conotoxin-like pl14.3.